A 509-amino-acid chain; its full sequence is Dihydrolipoyl dehydrogenase, mitochondrial (509 aa).

The N-terminal 35 residues, 1–35, are a transit peptide targeting the mitochondrion; sequence MQSWSRVYCSLAKKGHFNRLSHGLQGASSVPLRTY. Position 66 is an N6-acetyllysine; alternate (lysine 66). Position 66 is an N6-succinyllysine; alternate (lysine 66). FAD contacts are provided by residues 71–80 and lysine 89; that span reads EKNETLGGTC. Cysteine 80 and cysteine 85 are joined by a disulfide. N6-acetyllysine; alternate is present on residues lysine 104, lysine 122, lysine 132, and lysine 143. Residues lysine 104, lysine 122, lysine 132, and lysine 143 each carry the N6-succinyllysine; alternate modification. Position 154 (glycine 154) interacts with FAD. Lysine 159 bears the N6-succinyllysine mark. An FAD-binding site is contributed by 183–185; sequence TGS. Residues 220-227 and glutamate 243 contribute to the NAD(+) site; that span reads GAGVIGVE. An N6-succinyllysine mark is found at lysine 273 and lysine 277. Valine 278 serves as a coordination point for NAD(+). 2 positions are modified to phosphoserine: serine 285 and serine 297. NAD(+) is bound at residue glycine 314. Lysine 346 is subject to N6-acetyllysine. FAD-binding positions include aspartate 355 and 361–364; that span reads MLAH. Lysine 410 bears the N6-acetyllysine; alternate mark. Position 410 is an N6-succinyllysine; alternate (lysine 410). Residues lysine 417 and lysine 420 each carry the N6-acetyllysine modification. N6-succinyllysine is present on lysine 430. The Proton acceptor role is filled by histidine 487. A Phosphoserine modification is found at serine 502. Lysine 505 carries the N6-acetyllysine; alternate modification. At lysine 505 the chain carries N6-succinyllysine; alternate.

Belongs to the class-I pyridine nucleotide-disulfide oxidoreductase family. As to quaternary structure, homodimer. Part of the multimeric pyruvate dehydrogenase complex that contains multiple copies of pyruvate dehydrogenase (subunits PDHA (PDHA1 or PDHA2) and PDHB, E1), dihydrolipoamide acetyltransferase (DLAT, E2) and lipoamide dehydrogenase (DLD, E3). These subunits are bound to an inner core composed of about 48 DLAT and 12 PDHX molecules (by non covalent bonds). The 2-oxoglutarate dehydrogenase complex is composed of OGDH (2-oxoglutarate dehydrogenase; E1), DLST (dihydrolipoamide succinyltransferase; E2), DLD (dihydrolipoamide dehydrogenase; E3) and the assembly factor KGD4. It contains multiple copies of the three enzymatic components (E1, E2 and E3). In the nucleus, the 2-oxoglutarate dehydrogenase complex associates with KAT2A. Interacts with PDHX. FAD serves as cofactor. In terms of processing, tyrosine phosphorylated.

The protein localises to the mitochondrion matrix. Its subcellular location is the nucleus. The protein resides in the cell projection. It localises to the cilium. It is found in the flagellum. The protein localises to the cytoplasmic vesicle. Its subcellular location is the secretory vesicle. The protein resides in the acrosome. The catalysed reaction is N(6)-[(R)-dihydrolipoyl]-L-lysyl-[protein] + NAD(+) = N(6)-[(R)-lipoyl]-L-lysyl-[protein] + NADH + H(+). Its function is as follows. Lipoamide dehydrogenase is a component of the glycine cleavage system as well as an E3 component of three alpha-ketoacid dehydrogenase complexes (pyruvate-, alpha-ketoglutarate-, and branched-chain amino acid-dehydrogenase complex). The 2-oxoglutarate dehydrogenase complex is mainly active in the mitochondrion. A fraction of the 2-oxoglutarate dehydrogenase complex also localizes in the nucleus and is required for lysine succinylation of histones: associates with KAT2A on chromatin and provides succinyl-CoA to histone succinyltransferase KAT2A. In monomeric form may have additional moonlighting function as serine protease. Involved in the hyperactivation of spermatazoa during capacitation and in the spermatazoal acrosome reaction. The chain is Dihydrolipoyl dehydrogenase, mitochondrial (Dld) from Rattus norvegicus (Rat).